The following is a 466-amino-acid chain: Asparagine--tRNA ligase (466 aa).

This sequence belongs to the class-II aminoacyl-tRNA synthetase family. In terms of assembly, homodimer.

It localises to the cytoplasm. The catalysed reaction is tRNA(Asn) + L-asparagine + ATP = L-asparaginyl-tRNA(Asn) + AMP + diphosphate + H(+). The sequence is that of Asparagine--tRNA ligase from Shewanella baltica (strain OS155 / ATCC BAA-1091).